The primary structure comprises 236 residues: MAKKQEFTFKQFHINQDQCAMKVGTDGILLGAWANINQANTLLDLGTGTGLIALMLAQRSPEHCQISAVELDQLAYLQAKDNIQQSPWANKIKIFQQDIIVFAQDCEHKFDVITANPPYFKQGVDCASKQRNLARYTLTQSHLDWLNAAEKLLNLTGEIHLILPFEEGKSLQKKCGLFCIRECKIITKAGKTPQRLLLSFSREERKCEESQLVIYDRNNQYSTEFKTLTQDFYLNF.

Belongs to the methyltransferase superfamily. tRNA (adenine-N(6)-)-methyltransferase family.

It localises to the cytoplasm. It carries out the reaction adenosine(37) in tRNA1(Val) + S-adenosyl-L-methionine = N(6)-methyladenosine(37) in tRNA1(Val) + S-adenosyl-L-homocysteine + H(+). In terms of biological role, specifically methylates the adenine in position 37 of tRNA(1)(Val) (anticodon cmo5UAC). This chain is tRNA1(Val) (adenine(37)-N6)-methyltransferase, found in Histophilus somni (strain 2336) (Haemophilus somnus).